A 938-amino-acid chain; its full sequence is Isoleucine--tRNA ligase (938 aa).

The short motif at 58–68 is the 'HIGH' region element; the sequence is PYANGNIHIGH. Glu561 lines the L-isoleucyl-5'-AMP pocket. A 'KMSKS' region motif is present at residues 602–606; sequence KMSKS. Lys605 provides a ligand contact to ATP. 4 residues coordinate Zn(2+): Cys901, Cys904, Cys921, and Cys924.

It belongs to the class-I aminoacyl-tRNA synthetase family. IleS type 1 subfamily. As to quaternary structure, monomer. The cofactor is Zn(2+).

The protein resides in the cytoplasm. It catalyses the reaction tRNA(Ile) + L-isoleucine + ATP = L-isoleucyl-tRNA(Ile) + AMP + diphosphate. Functionally, catalyzes the attachment of isoleucine to tRNA(Ile). As IleRS can inadvertently accommodate and process structurally similar amino acids such as valine, to avoid such errors it has two additional distinct tRNA(Ile)-dependent editing activities. One activity is designated as 'pretransfer' editing and involves the hydrolysis of activated Val-AMP. The other activity is designated 'posttransfer' editing and involves deacylation of mischarged Val-tRNA(Ile). The polypeptide is Isoleucine--tRNA ligase (Yersinia enterocolitica serotype O:8 / biotype 1B (strain NCTC 13174 / 8081)).